The chain runs to 360 residues: Photosystem II protein D1 3 (360 aa).

3 helical membrane passes run 29–46, 118–133, and 142–156; these read YVGW…TATI, HFLL…QWEL, and WICV…AAFA. H118 is a binding site for chlorophyll a. Y126 contributes to the pheophytin a binding site. Residues D170 and E189 each contribute to the [CaMn4O5] cluster site. The helical transmembrane segment at 197–218 threads the bilayer; sequence FHMLGVAGVFGGSLFSAMHGSL. Residue H198 coordinates chlorophyll a. A quinone is bound by residues H215 and 264 to 265; that span reads SF. Residue H215 participates in Fe cation binding. H272 serves as a coordination point for Fe cation. A helical membrane pass occupies residues 274-288; that stretch reads FLGAWPVVGIWFTSM. [CaMn4O5] cluster-binding residues include H332, E333, D342, and A344. The propeptide occupies 345-360; it reads AGEATPVALTAPSIHG.

The protein belongs to the reaction center PufL/M/PsbA/D family. As to quaternary structure, PSII is composed of 1 copy each of membrane proteins PsbA, PsbB, PsbC, PsbD, PsbE, PsbF, PsbH, PsbI, PsbJ, PsbK, PsbL, PsbM, PsbT, PsbX, PsbY, PsbZ, Psb30/Ycf12, peripheral proteins PsbO, CyanoQ (PsbQ), PsbU, PsbV and a large number of cofactors. It forms dimeric complexes. The cofactor is The D1/D2 heterodimer binds P680, chlorophylls that are the primary electron donor of PSII, and subsequent electron acceptors. It shares a non-heme iron and each subunit binds pheophytin, quinone, additional chlorophylls, carotenoids and lipids. D1 provides most of the ligands for the Mn4-Ca-O5 cluster of the oxygen-evolving complex (OEC). There is also a Cl(-1) ion associated with D1 and D2, which is required for oxygen evolution. The PSII complex binds additional chlorophylls, carotenoids and specific lipids.. In terms of processing, tyr-161 forms a radical intermediate that is referred to as redox-active TyrZ, YZ or Y-Z. Post-translationally, C-terminally processed by CtpA; processing is essential to allow assembly of the oxygen-evolving complex and thus photosynthetic growth.

Its subcellular location is the cellular thylakoid membrane. The catalysed reaction is 2 a plastoquinone + 4 hnu + 2 H2O = 2 a plastoquinol + O2. In terms of biological role, photosystem II (PSII) is a light-driven water:plastoquinone oxidoreductase that uses light energy to abstract electrons from H(2)O, generating O(2) and a proton gradient subsequently used for ATP formation. It consists of a core antenna complex that captures photons, and an electron transfer chain that converts photonic excitation into a charge separation. The D1/D2 (PsbA/PsbD) reaction center heterodimer binds P680, the primary electron donor of PSII as well as several subsequent electron acceptors. The polypeptide is Photosystem II protein D1 3 (Synechococcus sp. (strain ATCC 27144 / PCC 6301 / SAUG 1402/1) (Anacystis nidulans)).